Reading from the N-terminus, the 114-residue chain is MGAPEPSWCFLFLPVLLTVGGLSPVQAQSDNYPGCECSSVSPGVLAGIVLGDLVLTLLIALAVYSLGRLVSRGRGTADGTRKQHMAETESPYQELQGQRPEVYSDLNTQRQYYR.

The signal sequence occupies residues 1–27; sequence MGAPEPSWCFLFLPVLLTVGGLSPVQA. At 28 to 42 the chain is on the extracellular side; it reads QSDNYPGCECSSVSP. A helical membrane pass occupies residues 43–63; that stretch reads GVLAGIVLGDLVLTLLIALAV. Asp52 is a binding site for Ca(2+). Residues 64–114 are Cytoplasmic-facing; sequence YSLGRLVSRGRGTADGTRKQHMAETESPYQELQGQRPEVYSDLNTQRQYYR. The disordered stretch occupies residues 72–114; the sequence is RGRGTADGTRKQHMAETESPYQELQGQRPEVYSDLNTQRQYYR. The ITAM domain maps to 81–109; the sequence is RKQHMAETESPYQELQGQRPEVYSDLNTQ. 2 positions are modified to phosphotyrosine: Tyr92 and Tyr103. Residues 105 to 114 show a composition bias toward polar residues; that stretch reads DLNTQRQYYR.

The protein belongs to the TYROBP family. As to quaternary structure, homodimer; disulfide-linked. Homotrimer; disulfide-linked. Homotetramer; disulfide-linked. Homotrimers and homotetramers form when low levels of partner receptors are available and is competitive with assembly with interacting receptors. They may represent alternative oligomerization states or may be intermediates in the receptor assembly process. Binding of a metal cation aids in homooligomerization through coordination of the metal ion by the subunits of the oligomer. Interacts with TREM1. Interacts with TREM2. Interacts with CLECSF5. Interacts with CD300LB and CD300C2. Interacts with CD300E. Interacts (via ITAM domain) with SYK (via SH2 domains); activates SYK mediating neutrophils and macrophages integrin-mediated activation. Interacts with KLRC2. Interacts with CD300H. Interacts with KLRD1. Interacts with SIGLEC1. Post-translationally, following ligand binding by associated receptors, tyrosine phosphorylated in the ITAM domain which leads to activation of additional tyrosine kinases and subsequent cell activation.

The protein resides in the cell membrane. In terms of biological role, adapter protein which non-covalently associates with activating receptors found on the surface of a variety of immune cells to mediate signaling and cell activation following ligand binding by the receptors. TYROBP is tyrosine-phosphorylated in the ITAM domain following ligand binding by the associated receptors which leads to activation of additional tyrosine kinases and subsequent cell activation. Also has an inhibitory role in some cells. Non-covalently associates with activating receptors of the CD300 family to mediate cell activation. Also mediates cell activation through association with activating receptors of the CD200R family. Required for neutrophil activation mediated by integrin. Required for the activation of myeloid cells mediated by the CLEC5A/MDL1 receptor. Associates with natural killer (NK) cell receptors such as the KLRD1/KLRC2 heterodimer to mediate NK cell activation. Associates with TREM1 to mediate activation of neutrophils and monocytes. Associates with TREM2 on monocyte-derived dendritic cells to mediate up-regulation of chemokine receptor CCR7 and dendritic cell maturation and survival. PAssociation with TREM2 mediates cytokine-induced formation of multinucleated giant cells which are formed by the fusion of macrophages. Stabilizes the TREM2 C-terminal fragment (TREM2-CTF) produced by TREM2 ectodomain shedding which suppresses the release of pro-inflammatory cytokines. In microglia, required with TREM2 for phagocytosis of apoptotic neurons. Required with ITGAM/CD11B in microglia to control production of microglial superoxide ions which promote the neuronal apoptosis that occurs during brain development. Promotes pro-inflammatory responses in microglia following nerve injury which accelerates degeneration of injured neurons. ositively regulates the expression of the IRAK3/IRAK-M kinase and IL10 production by liver dendritic cells and inhibits their T cell allosimulatory ability. Negatively regulates B cell proliferation. Required for CSF1-mediated osteoclast cytoskeletal organization. Positively regulates multinucleation during osteoclast development. This Rattus norvegicus (Rat) protein is TYRO protein tyrosine kinase-binding protein.